Consider the following 518-residue polypeptide: Serine--tRNA ligase, mitochondrial (518 aa).

Residues 1–34 (MAASMARLWWPFLARQGLRSRGRCVCSQNPRRSF) constitute a mitochondrion transit peptide. An N6-acetyllysine modification is found at lysine 110. The residue at position 195 (lysine 195) is an N6-succinyllysine. Residue 299 to 301 (TAE) coordinates L-serine. Position 330–332 (330–332 (RAE)) interacts with ATP. Lysine 337 bears the N6-succinyllysine mark. Valine 345 is a binding site for ATP. Glutamate 352 contacts L-serine. An ATP-binding site is contributed by 418–421 (EVTS). Threonine 453 provides a ligand contact to L-serine. The disordered stretch occupies residues 497–518 (PLQYIGPNQPQKPRLPGQSATR).

The protein belongs to the class-II aminoacyl-tRNA synthetase family. Type-1 seryl-tRNA synthetase subfamily. As to quaternary structure, homodimer. The tRNA molecule probably binds across the dimer. Ubiquitous.

The protein localises to the mitochondrion matrix. The catalysed reaction is tRNA(Ser) + L-serine + ATP = L-seryl-tRNA(Ser) + AMP + diphosphate + H(+). It carries out the reaction tRNA(Sec) + L-serine + ATP = L-seryl-tRNA(Sec) + AMP + diphosphate + H(+). The protein operates within aminoacyl-tRNA biosynthesis; selenocysteinyl-tRNA(Sec) biosynthesis; L-seryl-tRNA(Sec) from L-serine and tRNA(Sec): step 1/1. In terms of biological role, catalyzes the attachment of serine to tRNA(Ser). Is also probably able to aminoacylate tRNA(Sec) with serine, to form the misacylated tRNA L-seryl-tRNA(Sec), which will be further converted into selenocysteinyl-tRNA(Sec). The sequence is that of Serine--tRNA ligase, mitochondrial (Sars2) from Mus musculus (Mouse).